Here is an 88-residue protein sequence, read N- to C-terminus: Beta-defensin 115 (88 aa).

An N-terminal signal peptide occupies residues 1–27 (MLPDHFSPLSGDIKLSVLALVVLVVLA). Disulfide bonds link Cys-38–Cys-65, Cys-45–Cys-59, and Cys-49–Cys-66.

Belongs to the beta-defensin family.

It is found in the secreted. Its function is as follows. Has antibacterial activity. The chain is Beta-defensin 115 (DEFB115) from Homo sapiens (Human).